The chain runs to 332 residues: Phosphate acyltransferase (332 aa).

Belongs to the PlsX family. As to quaternary structure, homodimer. Probably interacts with PlsY.

The protein localises to the cytoplasm. It catalyses the reaction a fatty acyl-[ACP] + phosphate = an acyl phosphate + holo-[ACP]. It participates in lipid metabolism; phospholipid metabolism. In terms of biological role, catalyzes the reversible formation of acyl-phosphate (acyl-PO(4)) from acyl-[acyl-carrier-protein] (acyl-ACP). This enzyme utilizes acyl-ACP as fatty acyl donor, but not acyl-CoA. This is Phosphate acyltransferase from Sulfurimonas denitrificans (strain ATCC 33889 / DSM 1251) (Thiomicrospira denitrificans (strain ATCC 33889 / DSM 1251)).